The primary structure comprises 203 residues: Protein S40-6 (203 aa).

Residues 1 to 33 (MAKGRKPTTMNRSDRYLGSYTYGDSHGNSVTDE) are disordered.

Belongs to the senescence regulator S40 family.

The protein localises to the cytoplasm. The sequence is that of Protein S40-6 from Arabidopsis thaliana (Mouse-ear cress).